The sequence spans 247 residues: Geranylgeranylglyceryl phosphate synthase (247 aa).

Aspartate 24 and serine 53 together coordinate Mg(2+). Sn-glycerol 1-phosphate is bound by residues 172-178 (YLEAGSG), 203-204 (GG), and 225-226 (GT).

Belongs to the GGGP/HepGP synthase family. Group II subfamily. Requires Mg(2+) as cofactor.

Its subcellular location is the cytoplasm. It catalyses the reaction sn-glycerol 1-phosphate + (2E,6E,10E)-geranylgeranyl diphosphate = sn-3-O-(geranylgeranyl)glycerol 1-phosphate + diphosphate. The protein operates within membrane lipid metabolism; glycerophospholipid metabolism. Prenyltransferase that catalyzes the transfer of the geranylgeranyl moiety of geranylgeranyl diphosphate (GGPP) to the C3 hydroxyl of sn-glycerol-1-phosphate (G1P). This reaction is the first ether-bond-formation step in the biosynthesis of archaeal membrane lipids. The sequence is that of Geranylgeranylglyceryl phosphate synthase from Cenarchaeum symbiosum (strain A).